The following is a 219-amino-acid chain: Carboxypeptidase Y inhibitor (219 aa).

M1 carries the post-translational modification N-acetylmethionine.

Belongs to the phosphatidylethanolamine-binding protein family. As to quaternary structure, monomer.

The protein localises to the cytoplasm. Specific and potent inhibitor of carboxypeptidase Y. This chain is Carboxypeptidase Y inhibitor (TFS1), found in Saccharomyces cerevisiae (strain ATCC 204508 / S288c) (Baker's yeast).